A 331-amino-acid chain; its full sequence is Inactive serine/threonine-protein kinase BKN1 (331 aa).

The N-myristoyl glycine moiety is linked to residue Gly-2. Cys-4 carries S-palmitoyl cysteine lipidation. One can recognise a Protein kinase domain in the interval 58–328; sequence DYSVRKFYKG…VLDGLNHIAE (271 aa).

It belongs to the protein kinase superfamily. Ser/Thr protein kinase family. As to expression, restricted to stigma in flowers.

Its subcellular location is the cell membrane. The protein localises to the nucleus. In terms of biological role, collaboratively with BKN2/SZE2, involved in compatible pollen-stigma interactions. The chain is Inactive serine/threonine-protein kinase BKN1 from Arabidopsis thaliana (Mouse-ear cress).